The primary structure comprises 288 residues: 4-hydroxy-3-methylbut-2-enyl diphosphate reductase (288 aa).

Cys-13 is a binding site for [4Fe-4S] cluster. Residues His-41 and His-75 each coordinate (2E)-4-hydroxy-3-methylbut-2-enyl diphosphate. Dimethylallyl diphosphate-binding residues include His-41 and His-75. Isopentenyl diphosphate-binding residues include His-41 and His-75. [4Fe-4S] cluster is bound at residue Cys-97. His-130 lines the (2E)-4-hydroxy-3-methylbut-2-enyl diphosphate pocket. Residue His-130 participates in dimethylallyl diphosphate binding. His-130 contributes to the isopentenyl diphosphate binding site. Glu-132 functions as the Proton donor in the catalytic mechanism. Thr-168 is a binding site for (2E)-4-hydroxy-3-methylbut-2-enyl diphosphate. Cys-199 contributes to the [4Fe-4S] cluster binding site. (2E)-4-hydroxy-3-methylbut-2-enyl diphosphate-binding residues include Ser-227, Ser-228, Asn-229, and Ser-271. 4 residues coordinate dimethylallyl diphosphate: Ser-227, Ser-228, Asn-229, and Ser-271. Residues Ser-227, Ser-228, Asn-229, and Ser-271 each contribute to the isopentenyl diphosphate site.

Belongs to the IspH family. [4Fe-4S] cluster is required as a cofactor.

It catalyses the reaction isopentenyl diphosphate + 2 oxidized [2Fe-2S]-[ferredoxin] + H2O = (2E)-4-hydroxy-3-methylbut-2-enyl diphosphate + 2 reduced [2Fe-2S]-[ferredoxin] + 2 H(+). The enzyme catalyses dimethylallyl diphosphate + 2 oxidized [2Fe-2S]-[ferredoxin] + H2O = (2E)-4-hydroxy-3-methylbut-2-enyl diphosphate + 2 reduced [2Fe-2S]-[ferredoxin] + 2 H(+). It functions in the pathway isoprenoid biosynthesis; dimethylallyl diphosphate biosynthesis; dimethylallyl diphosphate from (2E)-4-hydroxy-3-methylbutenyl diphosphate: step 1/1. Its pathway is isoprenoid biosynthesis; isopentenyl diphosphate biosynthesis via DXP pathway; isopentenyl diphosphate from 1-deoxy-D-xylulose 5-phosphate: step 6/6. Functionally, catalyzes the conversion of 1-hydroxy-2-methyl-2-(E)-butenyl 4-diphosphate (HMBPP) into a mixture of isopentenyl diphosphate (IPP) and dimethylallyl diphosphate (DMAPP). Acts in the terminal step of the DOXP/MEP pathway for isoprenoid precursor biosynthesis. The sequence is that of 4-hydroxy-3-methylbut-2-enyl diphosphate reductase from Phocaeicola vulgatus (strain ATCC 8482 / DSM 1447 / JCM 5826 / CCUG 4940 / NBRC 14291 / NCTC 11154) (Bacteroides vulgatus).